The sequence spans 1171 residues: Pesticidal crystal protein Cry1Ea (1171 aa).

Residues 1094 to 1124 (ESNSSVHASVYEEKSYTDRRRENPCESNRGY) form a disordered region. A compositionally biased stretch (basic and acidic residues) spans 1103–1117 (VYEEKSYTDRRRENP).

This sequence belongs to the delta endotoxin family.

Its function is as follows. Promotes colloidosmotic lysis by binding to the midgut epithelial cells of many lepidopteran larvae including Spodoptera species. The polypeptide is Pesticidal crystal protein Cry1Ea (cry1Ea) (Bacillus thuringiensis subsp. kenyae).